A 240-amino-acid polypeptide reads, in one-letter code: PF03932 family protein CutC (240 aa).

Belongs to the CutC family.

Its subcellular location is the cytoplasm. The polypeptide is PF03932 family protein CutC (Xanthomonas campestris pv. campestris (strain B100)).